Consider the following 140-residue polypeptide: Transcription antitermination protein NusB (140 aa).

The protein belongs to the NusB family.

Functionally, involved in transcription antitermination. Required for transcription of ribosomal RNA (rRNA) genes. Binds specifically to the boxA antiterminator sequence of the ribosomal RNA (rrn) operons. This is Transcription antitermination protein NusB from Alteromonas mediterranea (strain DSM 17117 / CIP 110805 / LMG 28347 / Deep ecotype).